The chain runs to 201 residues: Large ribosomal subunit protein eL15 (201 aa).

It belongs to the eukaryotic ribosomal protein eL15 family.

This is Large ribosomal subunit protein eL15 (RPL15) from Quercus suber (Cork oak).